A 704-amino-acid chain; its full sequence is Fatty acid oxidation complex subunit alpha (704 aa).

The enoyl-CoA hydratase stretch occupies residues Met1–Pro190. Positions Thr308–Asp704 are 3-hydroxyacyl-CoA dehydrogenase.

This sequence in the N-terminal section; belongs to the enoyl-CoA hydratase/isomerase family. In the central section; belongs to the 3-hydroxyacyl-CoA dehydrogenase family. Heterotetramer of two alpha chains (FadJ) and two beta chains (FadI).

It is found in the cytoplasm. The catalysed reaction is a (3S)-3-hydroxyacyl-CoA = a (2E)-enoyl-CoA + H2O. The enzyme catalyses a 4-saturated-(3S)-3-hydroxyacyl-CoA = a (3E)-enoyl-CoA + H2O. It catalyses the reaction a (3S)-3-hydroxyacyl-CoA + NAD(+) = a 3-oxoacyl-CoA + NADH + H(+). It carries out the reaction (3S)-3-hydroxybutanoyl-CoA = (3R)-3-hydroxybutanoyl-CoA. It functions in the pathway lipid metabolism; fatty acid beta-oxidation. In terms of biological role, catalyzes the formation of a hydroxyacyl-CoA by addition of water on enoyl-CoA. Also exhibits 3-hydroxyacyl-CoA epimerase and 3-hydroxyacyl-CoA dehydrogenase activities. The protein is Fatty acid oxidation complex subunit alpha of Vibrio campbellii (strain ATCC BAA-1116).